Here is a 166-residue protein sequence, read N- to C-terminus: UPF0304 protein VC_1871 (166 aa).

This sequence belongs to the UPF0304 family.

This is UPF0304 protein VC_1871 from Vibrio cholerae serotype O1 (strain ATCC 39315 / El Tor Inaba N16961).